The following is a 171-amino-acid chain: MTKWFNVGKIVNTHGVRGEIRVISRTDFPEERYKVGNTLYISNEKGTDYLPVKVTSHRQHKTFDLLTFEGYNNVDEVEKFKGSLIKVPEEQLGELAEGEYYYHEIIGCSVVTEEGEALGTIKEILSPGANDVWVIKRPKGQDLLIPYIDDVVLQVNIENKLVTIHVMEGLL.

The PRC barrel domain occupies 97 to 170; sequence EGEYYYHEII…LVTIHVMEGL (74 aa).

This sequence belongs to the RimM family. In terms of assembly, binds ribosomal protein uS19.

It is found in the cytoplasm. In terms of biological role, an accessory protein needed during the final step in the assembly of 30S ribosomal subunit, possibly for assembly of the head region. Essential for efficient processing of 16S rRNA. May be needed both before and after RbfA during the maturation of 16S rRNA. It has affinity for free ribosomal 30S subunits but not for 70S ribosomes. The protein is Ribosome maturation factor RimM of Bacillus cereus (strain ATCC 14579 / DSM 31 / CCUG 7414 / JCM 2152 / NBRC 15305 / NCIMB 9373 / NCTC 2599 / NRRL B-3711).